Reading from the N-terminus, the 617-residue chain is Chaperone protein HscA homolog (617 aa).

Belongs to the heat shock protein 70 family.

Chaperone involved in the maturation of iron-sulfur cluster-containing proteins. Has a low intrinsic ATPase activity which is markedly stimulated by HscB. The chain is Chaperone protein HscA homolog from Actinobacillus pleuropneumoniae serotype 5b (strain L20).